Here is a 319-residue protein sequence, read N- to C-terminus: Ribonuclease Z (319 aa).

Zn(2+) is bound by residues His62, His64, Asp66, His67, His145, Asp215, and His273. Asp66 serves as the catalytic Proton acceptor.

The protein belongs to the RNase Z family. As to quaternary structure, homodimer. Requires Zn(2+) as cofactor.

The enzyme catalyses Endonucleolytic cleavage of RNA, removing extra 3' nucleotides from tRNA precursor, generating 3' termini of tRNAs. A 3'-hydroxy group is left at the tRNA terminus and a 5'-phosphoryl group is left at the trailer molecule.. Its function is as follows. Zinc phosphodiesterase, which displays some tRNA 3'-processing endonuclease activity. Probably involved in tRNA maturation, by removing a 3'-trailer from precursor tRNA. The chain is Ribonuclease Z from Borrelia hermsii (strain HS1 / DAH).